The chain runs to 476 residues: WASH complex subunit 1 (476 aa).

Residues 1-54 are required for WASH complex assembly; sequence MTTVAQKHFLEGQTYSVPLIQPDLRREEAVQQVADALQYLQKVSGDIFNRISQR. 2 disordered regions span residues 273-412 and 427-476; these read SAPS…QGGD and GISG…DWES. Polar residues predominate over residues 284-296; the sequence is TFSTESVEPSQAD. The span at 302–333 shows a compositional bias: pro residues; that stretch reads LLPPPPPPPPPPPPVMPTTVPPPPPLPQPTAP. Positions 354–476 are VCA; sequence QGAPKEVVNP…GEEDEDDWES (123 aa). One can recognise a WH2 domain in the interval 366-388; it reads GRASLLESIRQAGGIGKANLRSV. Positions 387-403 are enriched in basic and acidic residues; the sequence is SVKERKLEKKKQKEQEQ. Over residues 467 to 476 the composition is skewed to acidic residues; sequence GEEDEDDWES.

The protein belongs to the WASH1 family. As to quaternary structure, component of the WASH complex.

Its subcellular location is the early endosome membrane. The protein localises to the recycling endosome membrane. In terms of biological role, acts as a nucleation-promoting factor at the surface of endosomes, where it recruits and activates the Arp2/3 complex to induce actin polymerization, playing a key role in the fission of tubules that serve as transport intermediates during endosome sorting. The sequence is that of WASH complex subunit 1 from Gallus gallus (Chicken).